The following is a 413-amino-acid chain: Serine hydroxymethyltransferase (413 aa).

Residues Leu-117 and 121–123 (GHL) contribute to the (6S)-5,6,7,8-tetrahydrofolate site. Lys-226 carries the N6-(pyridoxal phosphate)lysine modification. (6S)-5,6,7,8-tetrahydrofolate-binding positions include Glu-239 and 349 to 351 (SPF).

This sequence belongs to the SHMT family. As to quaternary structure, homodimer. Pyridoxal 5'-phosphate is required as a cofactor.

It localises to the cytoplasm. It carries out the reaction (6R)-5,10-methylene-5,6,7,8-tetrahydrofolate + glycine + H2O = (6S)-5,6,7,8-tetrahydrofolate + L-serine. The protein operates within one-carbon metabolism; tetrahydrofolate interconversion. It functions in the pathway amino-acid biosynthesis; glycine biosynthesis; glycine from L-serine: step 1/1. Its function is as follows. Catalyzes the reversible interconversion of serine and glycine with tetrahydrofolate (THF) serving as the one-carbon carrier. This reaction serves as the major source of one-carbon groups required for the biosynthesis of purines, thymidylate, methionine, and other important biomolecules. Also exhibits THF-independent aldolase activity toward beta-hydroxyamino acids, producing glycine and aldehydes, via a retro-aldol mechanism. The polypeptide is Serine hydroxymethyltransferase (Bacillus mycoides (strain KBAB4) (Bacillus weihenstephanensis)).